The primary structure comprises 160 residues: Ribosomal RNA large subunit methyltransferase H (160 aa).

S-adenosyl-L-methionine-binding positions include Leu-76, Gly-108, and 127–132 (LGKMTW).

It belongs to the RNA methyltransferase RlmH family. Homodimer.

Its subcellular location is the cytoplasm. It catalyses the reaction pseudouridine(1915) in 23S rRNA + S-adenosyl-L-methionine = N(3)-methylpseudouridine(1915) in 23S rRNA + S-adenosyl-L-homocysteine + H(+). Functionally, specifically methylates the pseudouridine at position 1915 (m3Psi1915) in 23S rRNA. This Rhizobium etli (strain CIAT 652) protein is Ribosomal RNA large subunit methyltransferase H.